Here is a 533-residue protein sequence, read N- to C-terminus: Calcium/calmodulin-dependent protein kinase type II (533 aa).

Residues 18-26 and lysine 41 contribute to the ATP site; that span reads LGKGAFSVV. Aspartate 134 acts as the Proton acceptor in catalysis. Threonine 284 carries the post-translational modification Phosphothreonine; by autocatalysis. Polar residues-rich tracts occupy residues 316–345 and 377–391; these read TSDS…QPTS and PPST…SQTI. Disordered regions lie at residues 316–347 and 369–400; these read TSDS…TSPA and LLNK…EKAQ.

This sequence belongs to the protein kinase superfamily. CAMK Ser/Thr protein kinase family. CaMK subfamily. Dodecamer. Subunits are tightly packed around a central ring-shaped scaffold with extensive contacts between the regulatory segment of one kinase and the catalytic domain of another enabling cooperative activation of a subunit by the adjacent molecule. Interacts with and phosphorylates daf-16; the interaction promotes daf-16 nuclear localization. Interacts with egl-2 and tir-1. Interacts with nsy-1. Mg(2+) is required as a cofactor.

The protein localises to the cytoplasm. It localises to the cell projection. It is found in the axon. The protein resides in the perikaryon. The enzyme catalyses L-seryl-[protein] + ATP = O-phospho-L-seryl-[protein] + ADP + H(+). It carries out the reaction L-threonyl-[protein] + ATP = O-phospho-L-threonyl-[protein] + ADP + H(+). Its activity is regulated as follows. Ca(2+)/calmodulin binding removes an autoinhibitory regulatory segment located C-terminal to the kinase domain. This releases the catalytic activity of the enzyme and makes accessible a regulatory residue Thr-284. Phosphorylation of Thr-284 by another kinase domain within the oligomeric holoenzyme keeps CaMKII active in the absence of Ca(2+)/calmodulin by preventing the rebinding of the regulatory segment to the kinase domain and by increasing the affinity of calmodulin for the enzyme. Can respond to high-frequency Ca(2+) pulses to become Ca(2+) independent. Its function is as follows. Role in locomotion and neuronal cell fate specification. Required for the regulation of synaptic density, egg laying, defecation, and meiotic maturation. Required for viability under chronic osmotic stress in which it acts downstream of osr-1. Regulates the synaptic trafficking of glr-1. Bidirectional modulator of neurotransmitter release with negative modulatory effects mainly mediated via slo-1 activation. May suppress the functional response to an internal pacemaker, perhaps by modulating the activity of the IP3 receptor. The chain is Calcium/calmodulin-dependent protein kinase type II from Caenorhabditis briggsae.